Here is a 188-residue protein sequence, read N- to C-terminus: MAPTMLVLLVPPFPVARGLLRNCWKQLQGKLLQSRPGFSSPPWGPALAVQGPAIFSEPTNDTSGSTETSSLLDSIFWMAAPKNRRSIEVNRCRRRNPHKLIKVKNNIDFCPECGHLKQKHVLCGYCYEKVRKETAEIRRQIGKQEGGPFKAPTVETVVLYSGETPSEHDQGKRIIERERKRPSWFTQN.

4 residues coordinate Zn(2+): Cys110, Cys113, Cys123, and Cys126. The tract at residues 162–188 (GETPSEHDQGKRIIERERKRPSWFTQN) is disordered. The segment covering 165 to 181 (PSEHDQGKRIIERERKR) has biased composition (basic and acidic residues).

This sequence belongs to the bacterial ribosomal protein bL32 family. In terms of assembly, component of the mitochondrial ribosome large subunit (39S) which comprises a 16S rRNA and about 50 distinct proteins. Post-translationally, MRPL32 precursor is processed by the m-AAA protease (composed of AFG3L2 and SPG7), which cleaves the N-terminal transit peptide. Cleavage by the m-AAA protease takes place prior to assembly into the large subunit, an essential step for mitochondrial ribosome (mitoribosome) assembly. Proper processing by the m-AAA protease is dependent on the zinc-binding region within the tightly folded C-terminal domain of MRPL32: zinc-dependent folding halts degradation initiated from the N-terminus and triggers the release of mature MRPL32.

The protein localises to the mitochondrion. Its function is as follows. Component of the mitochondrial large ribosomal subunit (mt-LSU). The mitochondrial ribosome (mitoribosome) is a large ribonucleoprotein complex responsible for the synthesis of proteins inside mitochondria. The protein is Large ribosomal subunit protein bL32m (MRPL32) of Bos taurus (Bovine).